The following is a 503-amino-acid chain: Probable cytosol aminopeptidase (503 aa).

Mn(2+) is bound by residues lysine 270 and aspartate 275. Lysine 282 is a catalytic residue. Positions 293, 352, and 354 each coordinate Mn(2+). The active site involves arginine 356.

It belongs to the peptidase M17 family. Requires Mn(2+) as cofactor.

It localises to the cytoplasm. The enzyme catalyses Release of an N-terminal amino acid, Xaa-|-Yaa-, in which Xaa is preferably Leu, but may be other amino acids including Pro although not Arg or Lys, and Yaa may be Pro. Amino acid amides and methyl esters are also readily hydrolyzed, but rates on arylamides are exceedingly low.. It catalyses the reaction Release of an N-terminal amino acid, preferentially leucine, but not glutamic or aspartic acids.. In terms of biological role, presumably involved in the processing and regular turnover of intracellular proteins. Catalyzes the removal of unsubstituted N-terminal amino acids from various peptides. The polypeptide is Probable cytosol aminopeptidase (Shigella boydii serotype 4 (strain Sb227)).